A 309-amino-acid polypeptide reads, in one-letter code: Porphobilinogen deaminase (309 aa).

S-(dipyrrolylmethanemethyl)cysteine is present on Cys-242.

Belongs to the HMBS family. As to quaternary structure, monomer. Dipyrromethane is required as a cofactor.

It carries out the reaction 4 porphobilinogen + H2O = hydroxymethylbilane + 4 NH4(+). Its pathway is porphyrin-containing compound metabolism; protoporphyrin-IX biosynthesis; coproporphyrinogen-III from 5-aminolevulinate: step 2/4. In terms of biological role, tetrapolymerization of the monopyrrole PBG into the hydroxymethylbilane pre-uroporphyrinogen in several discrete steps. In Shewanella sediminis (strain HAW-EB3), this protein is Porphobilinogen deaminase.